Here is a 1396-residue protein sequence, read N- to C-terminus: Sterol 3-beta-glucosyltransferase (1396 aa).

Basic and acidic residues predominate over residues 1-16 (MRPLLDEAKRRVDRRL). Disordered stretches follow at residues 1–59 (MRPL…TKEG), 82–193 (HARF…AAPV), and 206–233 (SKGS…TSAS). Over residues 18 to 28 (ASRQSLSTSRI) the composition is skewed to polar residues. 2 stretches are compositionally biased toward basic and acidic residues: residues 35-44 (ERLKDDHDAQ) and 82-108 (HARF…KESQ). Positions 156–175 (GSSQRQGGAQTEPSTGNQMS) are enriched in polar residues. A GRAM 1 domain is found at 237–288 (LRLMEMFGFESPEKVLVEYACSLVQSMLLQGYMYVTEGHICFYAYLPRKSTV). Positions 289–387 (AIKSGYLYKR…WVKSLQKVIF (99 aa)) constitute a PH domain. Polar residues-rich tracts occupy residues 459–479 (QAKN…QSRA) and 487–497 (SLTSGLSQVLG). 2 disordered regions span residues 459–531 (QAKN…RDLS) and 576–635 (FRRQ…VQQS). Over residues 585–595 (QFGRRHSDETA) the composition is skewed to basic and acidic residues. Positions 719–785 (DRFRAHFALP…KDVENVEKEK (67 aa)) constitute a GRAM 2 domain. Residues 841 to 880 (EQDESEAAKAEHRMLQEARKDASGGLIPQTPSDESPEIHP) form a disordered region. Over residues 846–862 (EAAKAEHRMLQEARKDA) the composition is skewed to basic and acidic residues. Residues S907, R908, D910, A1210, H1212, H1225, G1229, T1230, D1249, and Q1250 each contribute to the UDP-alpha-D-glucose site.

Belongs to the glycosyltransferase 28 family.

The protein localises to the cytoplasm. It localises to the preautophagosomal structure membrane. The enzyme catalyses a sterol + UDP-alpha-D-glucose = a sterol 3-beta-D-glucoside + UDP + H(+). It catalyses the reaction ergosterol + UDP-alpha-D-glucose = ergosteryl 3-beta-D-glucoside + UDP + H(+). Its function is as follows. Sterol glycosyltransferase responsible for the glycosylation of ergosterol to form ergosterol-glucoside. This chain is Sterol 3-beta-glucosyltransferase, found in Aspergillus terreus (strain NIH 2624 / FGSC A1156).